Reading from the N-terminus, the 191-residue chain is Threonylcarbamoyl-AMP synthase (191 aa).

The YrdC-like domain occupies 10 to 191 (PFRVRHAAAE…DGRSGAYLRR (182 aa)).

It belongs to the SUA5 family. TsaC subfamily.

It localises to the cytoplasm. The enzyme catalyses L-threonine + hydrogencarbonate + ATP = L-threonylcarbamoyladenylate + diphosphate + H2O. Functionally, required for the formation of a threonylcarbamoyl group on adenosine at position 37 (t(6)A37) in tRNAs that read codons beginning with adenine. Catalyzes the conversion of L-threonine, HCO(3)(-)/CO(2) and ATP to give threonylcarbamoyl-AMP (TC-AMP) as the acyladenylate intermediate, with the release of diphosphate. The chain is Threonylcarbamoyl-AMP synthase from Halorhodospira halophila (strain DSM 244 / SL1) (Ectothiorhodospira halophila (strain DSM 244 / SL1)).